The sequence spans 183 residues: Threonylcarbamoyl-AMP synthase (183 aa).

In terms of domain architecture, YrdC-like spans 1-183 (MNITQIIEKL…LFTNQLVRQG (183 aa)).

It belongs to the SUA5 family. TsaC subfamily.

Its subcellular location is the cytoplasm. It catalyses the reaction L-threonine + hydrogencarbonate + ATP = L-threonylcarbamoyladenylate + diphosphate + H2O. In terms of biological role, required for the formation of a threonylcarbamoyl group on adenosine at position 37 (t(6)A37) in tRNAs that read codons beginning with adenine. Catalyzes the conversion of L-threonine, HCO(3)(-)/CO(2) and ATP to give threonylcarbamoyl-AMP (TC-AMP) as the acyladenylate intermediate, with the release of diphosphate. The protein is Threonylcarbamoyl-AMP synthase of Histophilus somni (strain 2336) (Haemophilus somnus).